Reading from the N-terminus, the 149-residue chain is Protein AIM7 (149 aa).

Position 2 is an N-acetylserine (Ser-2). In terms of domain architecture, ADF-H spans 3–147; the sequence is NLYKIGTETR…DVEELREQLE (145 aa). A Phosphoserine modification is found at Ser-137.

The protein belongs to the actin-binding proteins ADF family. GMF subfamily.

It is found in the cytoplasm. The protein localises to the nucleus. May be involved in mitochondrial organization and biogenesis. This chain is Protein AIM7 (AIM7), found in Saccharomyces cerevisiae (strain ATCC 204508 / S288c) (Baker's yeast).